We begin with the raw amino-acid sequence, 101 residues long: NADH-quinone oxidoreductase subunit K (101 aa).

Helical transmembrane passes span 5 to 25 (PNWYLALSAVLFTIGTFGVLF), 30 to 50 (IVVLMSVELMLNAVNLTLVTF), and 62 to 82 (LVFFSIAVAAAEAAVGLAIVI).

Belongs to the complex I subunit 4L family. As to quaternary structure, NDH-1 is composed of 14 different subunits. Subunits NuoA, H, J, K, L, M, N constitute the membrane sector of the complex.

Its subcellular location is the cell inner membrane. The catalysed reaction is a quinone + NADH + 5 H(+)(in) = a quinol + NAD(+) + 4 H(+)(out). In terms of biological role, NDH-1 shuttles electrons from NADH, via FMN and iron-sulfur (Fe-S) centers, to quinones in the respiratory chain. The immediate electron acceptor for the enzyme in this species is believed to be a menaquinone. Couples the redox reaction to proton translocation (for every two electrons transferred, four hydrogen ions are translocated across the cytoplasmic membrane), and thus conserves the redox energy in a proton gradient. The chain is NADH-quinone oxidoreductase subunit K from Salinibacter ruber (strain DSM 13855 / M31).